Here is a 2898-residue protein sequence, read N- to C-terminus: Pericentrin (2898 aa).

Residues 1–117 (MEDEQEQRRR…QPPPPQTAHS (117 aa)) form a disordered region. Over residues 34–44 (SKKKTAKRKGS) the composition is skewed to basic residues. Phosphoserine is present on Ser-44. Coiled coils occupy residues 127–343 (LNNM…IRLL) and 382–434 (AQQQ…DSLE). The interval 429–460 (REDSLESTEISSSCVLPEETSGREGKEPPDPL) is disordered. Basic and acidic residues predominate over residues 448 to 457 (TSGREGKEPP). Coiled coils occupy residues 468 to 527 (KVQE…LREK), 611 to 696 (CALQ…LETH), 727 to 787 (VADV…SLRM), and 872 to 939 (SQDQ…LRRL). Ser-1022 is modified (phosphoserine). Coiled-coil stretches lie at residues 1069–1383 (EREF…QENM), 1429–1482 (NEVV…SLMG), and 1529–1593 (QLLA…AKEA). The residue at position 1437 (Ser-1437) is a Phosphoserine. Disordered stretches follow at residues 1745–1786 (VASR…DDVL), 1815–1880 (TQEK…PLTP), and 1958–1979 (TSPS…GPDI). Composition is skewed to polar residues over residues 1747-1766 (SRDT…SENG) and 1817-1834 (EKLT…SGHS). An interaction with CDK5RAP2 region spans residues 1801–1822 (NQDLLVQVEMPDFPTQEKLTSQ). 4 positions are modified to phosphoserine: Ser-1828, Ser-1859, Ser-1860, and Ser-1959. Positions 1963-1976 (ELARRSDGSRKSDG) are enriched in basic and acidic residues. Ser-1987 is modified (phosphoserine). A compositionally biased stretch (polar residues) spans 2046 to 2055 (SESQDPSSAL). A disordered region spans residues 2046 to 2088 (SESQDPSSALNKGEPRDPLDGFPRDSQALSEVTTDKGEKESLE). 2 stretches are compositionally biased toward basic and acidic residues: residues 2058–2068 (GEPRDPLDGFP) and 2078–2088 (TTDKGEKESLE). At Ser-2128 the chain carries Phosphoserine. 2 coiled-coil regions span residues 2211–2403 (KVEQ…EALQ) and 2429–2590 (HALL…ELSM). 2 disordered regions span residues 2509 to 2532 (VSGG…QFQE) and 2653 to 2684 (NRQS…QTTS). Residues 2545–2810 (LCAAGLLTSF…SQRQRSPSGP (266 aa)) are interaction with NEK2. Polar residues predominate over residues 2653–2671 (NRQSKSSLKQDGTDLQSSL). Residues 2758–2771 (KFRTAVRVVIAVLR) are calmodulin-binding. Residues 2787–2898 (ALVHPKSTRH…QKSCHQKIKQ (112 aa)) are disordered. The span at 2792–2802 (KSTRHGHRTSQ) shows a compositional bias: basic residues. The span at 2845–2860 (TSTPSSRLERSLTASQ) shows a compositional bias: polar residues. The span at 2861-2874 (DPEHSLTEYIHHLE) shows a compositional bias: basic and acidic residues. Ser-2865 carries the phosphoserine modification.

In terms of assembly, interacts with DISC1 and PCM1. Binds calmodulin. Interacts with CEP131. Interacts with CDK5RAP2; the interaction is leading to centrosomal localization of PCNT and CDK5RAP2. Interacts with CHD3. Interacts with CHD4; the interaction regulates centrosome integrity. Interacts with NEK2. Interacts with CCDC13. Interacts with CEP68. Interacts with ATF5; the ATF5:PCNT:polyglutamylated tubulin (PGT) tripartite unites the mother centriole and the pericentriolar material (PCM) in the centrosome. Cleaved during mitotis which leads to removal of CDK5RAP2 from the centrosome and promotes centriole disengagement and subsequent centriole separation. The C-terminal fragment is rapidly degraded following cleavage. Post-translationally, ubiquitinated by TRIM43; leading to proteasomal degradation. As to expression, expressed in heart and lung (at protein level). Expressed in kidney, thymus, liver, brain, muscle, testis, spleen, lung and heart.

The protein resides in the cytoplasm. It is found in the cytoskeleton. Its subcellular location is the microtubule organizing center. It localises to the centrosome. Its function is as follows. Integral component of the filamentous matrix of the centrosome involved in the initial establishment of organized microtubule arrays in both mitosis and meiosis. Plays a role, together with DISC1, in the microtubule network formation. Is an integral component of the pericentriolar material (PCM). May play an important role in preventing premature centrosome splitting during interphase by inhibiting NEK2 kinase activity at the centrosome. This is Pericentrin (Pcnt) from Mus musculus (Mouse).